Consider the following 339-residue polypeptide: MSQAMQPQRTSPSPDAAIAPARARGGVWQLINRSGIVMVFLVLFATLSLTVPDFLTPRNIQGLLLSVTLIGSIAVTMMFVLALGEVDLSVASIVAFSGVVASTLITATHSVVLGIAGGVLAGGAVGLVNGVLIARWRINSLIVTLAMMEVVRGLAFITSNGDAVMISEERFFDLGGGSFLGISYPIWSNIVGFVVFGFLLRKTVFGKNVLAVGGNGEAALLAGLPVMRIKITVFVLQGLVTGFAGVMLASRMSLGDPKTSVGLELGVISACVLGGVSLTGGVATISGVLVGVLIMGSVQDAMSLLNVPTFYQYLIRGGILLLAVLFDQYRRNQRRAMKI.

10 helical membrane passes run 35-55, 63-83, 88-108, 113-133, 138-158, 179-199, 204-224, 229-249, 275-295, and 306-326; these read GIVMVFLVLFATLSLTVPDFL, LLLSVTLIGSIAVTMMFVLAL, LSVASIVAFSGVVASTLITAT, LGIAGGVLAGGAVGLVNGVLI, INSLIVTLAMMEVVRGLAFIT, FLGISYPIWSNIVGFVVFGFL, VFGKNVLAVGGNGEAALLAGL, IKITVFVLQGLVTGFAGVMLA, GVSLTGGVATISGVLVGVLIM, and NVPTFYQYLIRGGILLLAVLF.

It belongs to the binding-protein-dependent transport system permease family. AraH/RbsC subfamily. The complex is composed of two ATP-binding proteins (AraG), two transmembrane proteins (AraH) and a solute-binding protein (AraF).

Its subcellular location is the cell inner membrane. In terms of biological role, part of the ABC transporter complex AraFGH involved in L-arabinose import. Responsible for the translocation of the substrate across the membrane. In Azospirillum brasilense, this protein is L-arabinose ABC transporter permease protein AraH (araH).